Reading from the N-terminus, the 345-residue chain is V-type proton ATPase subunit d (345 aa).

Met-1 bears the N-acetylmethionine mark.

The protein belongs to the V-ATPase V0D/AC39 subunit family. V-ATPase is a heteromultimeric enzyme composed of a peripheral catalytic V1 complex (components A to H) attached to an integral membrane V0 proton pore complex (components: a, c, c', c'', d, e, f and VOA1).

It is found in the vacuole membrane. Its function is as follows. Subunit of the V0 complex of vacuolar(H+)-ATPase (V-ATPase), a multisubunit enzyme composed of a peripheral complex (V1) that hydrolyzes ATP and a membrane integral complex (V0) that translocates protons. V-ATPase is responsible for acidifying and maintaining the pH of intracellular compartments. This subunit is a non-integral membrane component of the membrane pore domain and is required for proper assembly of the V0 sector. Might be involved in the regulated assembly of V1 subunits onto the membrane sector or alternatively may prevent the passage of protons through V0 pores. This is V-type proton ATPase subunit d from Saccharomyces cerevisiae (strain ATCC 204508 / S288c) (Baker's yeast).